The following is a 903-amino-acid chain: Dual 3',5'-cyclic-AMP and -GMP phosphodiesterase 11A (903 aa).

GAF domains are found at residues 175–324 and 356–512; these read DLTS…GIAI and DLEK…GLGI. A 3',5'-cyclic GMP-binding site is contributed by Ser378. In terms of domain architecture, PDEase spans 542-866; the sequence is SKTEVDKFKA…VKWEELDKKR (325 aa). Catalysis depends on His618, which acts as the Proton donor. Residues His622, His658, Asp659, and Asp770 each contribute to the a divalent metal cation site. The tract at residues 863 to 903 is disordered; sequence DKKRQHDHGASVPASPCSAAEGSETGGVPCCSNNTPPTHVS. Positions 893–903 are enriched in polar residues; that stretch reads CSNNTPPTHVS.

This sequence belongs to the cyclic nucleotide phosphodiesterase family. A divalent metal cation is required as a cofactor.

It is found in the cytoplasm. Its subcellular location is the cytosol. It catalyses the reaction 3',5'-cyclic GMP + H2O = GMP + H(+). The enzyme catalyses 3',5'-cyclic AMP + H2O = AMP + H(+). Its function is as follows. Plays a role in signal transduction by regulating the intracellular concentration of cyclic nucleotides cAMP and cGMP. Catalyzes the hydrolysis of both cAMP and cGMP to 5'-AMP and 5'-GMP, respectively. This Takifugu rubripes (Japanese pufferfish) protein is Dual 3',5'-cyclic-AMP and -GMP phosphodiesterase 11A (pde11a).